Reading from the N-terminus, the 208-residue chain is MKLVEVKHPLVKHKLGLMRAADISTKNFRELATEVGSLLTYEATSDLETEKVIIDGWCGDVEIDRIKGKKVTVVPILRAGLGMMDGVLEHIPSARISVVGMYRNEETLEPVPYFQKLASDLEERLAIVVDPMLATGGSMIATIDLLKQKGCKQIKVLVLVAAPEGIKALEAAHPDIEVYTASIDSHLNEQGYIVPGLGDAGDKIFGTK.

5-phospho-alpha-D-ribose 1-diphosphate contacts are provided by residues R78, R103, and 130 to 138 (DPMLATGGS). Residues I193 and 198 to 200 (GDA) contribute to the uracil site. D199 is a binding site for 5-phospho-alpha-D-ribose 1-diphosphate.

Belongs to the UPRTase family. Requires Mg(2+) as cofactor.

The enzyme catalyses UMP + diphosphate = 5-phospho-alpha-D-ribose 1-diphosphate + uracil. The protein operates within pyrimidine metabolism; UMP biosynthesis via salvage pathway; UMP from uracil: step 1/1. Its activity is regulated as follows. Allosterically activated by GTP. Catalyzes the conversion of uracil and 5-phospho-alpha-D-ribose 1-diphosphate (PRPP) to UMP and diphosphate. This chain is Uracil phosphoribosyltransferase, found in Actinobacillus succinogenes (strain ATCC 55618 / DSM 22257 / CCUG 43843 / 130Z).